The chain runs to 164 residues: SsrA-binding protein (164 aa).

Residues 141-164 (KLHDKRQDEKQKSIKREINSALKR) are disordered. Over residues 145-158 (KRQDEKQKSIKREI) the composition is skewed to basic and acidic residues.

This sequence belongs to the SmpB family.

It localises to the cytoplasm. Required for rescue of stalled ribosomes mediated by trans-translation. Binds to transfer-messenger RNA (tmRNA), required for stable association of tmRNA with ribosomes. tmRNA and SmpB together mimic tRNA shape, replacing the anticodon stem-loop with SmpB. tmRNA is encoded by the ssrA gene; the 2 termini fold to resemble tRNA(Ala) and it encodes a 'tag peptide', a short internal open reading frame. During trans-translation Ala-aminoacylated tmRNA acts like a tRNA, entering the A-site of stalled ribosomes, displacing the stalled mRNA. The ribosome then switches to translate the ORF on the tmRNA; the nascent peptide is terminated with the 'tag peptide' encoded by the tmRNA and targeted for degradation. The ribosome is freed to recommence translation, which seems to be the essential function of trans-translation. The polypeptide is SsrA-binding protein (Prochlorococcus marinus (strain MIT 9215)).